The primary structure comprises 386 residues: Beta-citrylglutamate synthase B (386 aa).

Residues 119-304 (FQELAGHGVP…VAGIIADYAA (186 aa)) enclose the ATP-grasp domain. ATP-binding positions include Lys158, 193 to 203 (QKYVKESHGRD), and Arg219. Asp264, Glu277, and Asn279 together coordinate Mg(2+). Positions 264, 277, and 279 each coordinate Mn(2+). Positions 325 to 359 (ASETSEPELGPPASTAVDNMSASSSSVDSDPESTE) are disordered. A compositionally biased stretch (low complexity) spans 338-352 (STAVDNMSASSSSVD).

This sequence belongs to the RimK family. Mg(2+) serves as cofactor. It depends on Mn(2+) as a cofactor.

The protein resides in the cytoplasm. It carries out the reaction citrate + L-glutamate + ATP = beta-citrylglutamate + ADP + phosphate + H(+). It catalyses the reaction N-acetyl-L-aspartate + L-glutamate + ATP = N-acetyl-L-aspartyl-L-glutamate + ADP + phosphate + H(+). In terms of biological role, catalyzes the synthesis of beta-citryl-L-glutamate and N-acetyl-L-aspartyl-L-glutamate. Beta-citryl-L-glutamate is synthesized more efficiently than N-acetyl-L-aspartyl-L-glutamate. This chain is Beta-citrylglutamate synthase B (RIMKLB), found in Homo sapiens (Human).